Here is a 604-residue protein sequence, read N- to C-terminus: uncharacterized protein (604 aa).

Residues 49 to 332 form the ABC transmembrane type-1 domain; that stretch reads LILVMLMVVI…LANQFNTMLS (284 aa). A run of 4 helical transmembrane segments spans residues 50–70, 86–106, 172–192, and 288–308; these read ILVMLMVVISAIFGLLGPFVI, LIPVLLLLLAIYIIQSLSLWF, VITFVGTIAVMLYMSPLLTLI, and IAAIGGLFALKGWISIGSIVV. The region spanning 366-600 is the ABC transporter domain; sequence IEFRDVSFGY…KGFYSDLYES (235 aa). ATP is bound at residue 399-406; that stretch reads GPTGAGKT. Residues 510–530 form a helical membrane-spanning segment; that stretch reads LISIARAVLADPVLLILDEAT.

The protein belongs to the ABC transporter superfamily.

It localises to the cell membrane. This is an uncharacterized protein from Bacillus subtilis (strain 168).